The following is a 361-amino-acid chain: Probable dual-specificity RNA methyltransferase RlmN (361 aa).

Glutamate 91 (proton acceptor) is an active-site residue. Positions 97-335 constitute a Radical SAM core domain; sequence QHYGLSVCVT…CVVRQEHGTD (239 aa). Cysteine 104 and cysteine 340 are oxidised to a cystine. Residues cysteine 111, cysteine 115, and cysteine 118 each contribute to the [4Fe-4S] cluster site. S-adenosyl-L-methionine-binding positions include 163 to 164, serine 195, 218 to 220, and asparagine 296; these read GE and SLH. Cysteine 340 (S-methylcysteine intermediate) is an active-site residue.

Belongs to the radical SAM superfamily. RlmN family. [4Fe-4S] cluster is required as a cofactor.

It is found in the cytoplasm. The enzyme catalyses adenosine(2503) in 23S rRNA + 2 reduced [2Fe-2S]-[ferredoxin] + 2 S-adenosyl-L-methionine = 2-methyladenosine(2503) in 23S rRNA + 5'-deoxyadenosine + L-methionine + 2 oxidized [2Fe-2S]-[ferredoxin] + S-adenosyl-L-homocysteine. It catalyses the reaction adenosine(37) in tRNA + 2 reduced [2Fe-2S]-[ferredoxin] + 2 S-adenosyl-L-methionine = 2-methyladenosine(37) in tRNA + 5'-deoxyadenosine + L-methionine + 2 oxidized [2Fe-2S]-[ferredoxin] + S-adenosyl-L-homocysteine. Specifically methylates position 2 of adenine 2503 in 23S rRNA and position 2 of adenine 37 in tRNAs. The chain is Probable dual-specificity RNA methyltransferase RlmN from Streptococcus mutans serotype c (strain ATCC 700610 / UA159).